A 54-amino-acid polypeptide reads, in one-letter code: Sec-independent protein translocase protein TatA (54 aa).

A helical membrane pass occupies residues 1–21 (MGMSFSHLLIVLLIIFVLFGA).

It belongs to the TatA/E family. The Tat system comprises two distinct complexes: a TatABC complex, containing multiple copies of TatA, TatB and TatC subunits, and a separate TatA complex, containing only TatA subunits. Substrates initially bind to the TatABC complex, which probably triggers association of the separate TatA complex to form the active translocon.

Its subcellular location is the cell inner membrane. Its function is as follows. Part of the twin-arginine translocation (Tat) system that transports large folded proteins containing a characteristic twin-arginine motif in their signal peptide across membranes. TatA could form the protein-conducting channel of the Tat system. In Rickettsia prowazekii (strain Madrid E), this protein is Sec-independent protein translocase protein TatA.